Consider the following 48-residue polypeptide: ATP synthase protein 8 (48 aa).

The chain crosses the membrane as a helical span at residues 13–35 (LTYGFTFILTILFLTSYVFLPMI).

Belongs to the ATPase protein 8 family. In terms of assembly, F-type ATPases have 2 components, CF(1) - the catalytic core - and CF(0) - the membrane proton channel. In yeast, the dimeric form of ATP synthase consists of 18 polypeptides: alpha, beta, gamma, delta, epsilon, 4 (B), 5 (OSCP), 6 (A), 8, 9 (C), d, E (Tim11), f, g, h, i, j and k.

The protein localises to the mitochondrion membrane. Its function is as follows. Mitochondrial membrane ATP synthase (F(1)F(0) ATP synthase or Complex V) produces ATP from ADP in the presence of a proton gradient across the membrane which is generated by electron transport complexes of the respiratory chain. F-type ATPases consist of two structural domains, F(1) - containing the extramembraneous catalytic core and F(0) - containing the membrane proton channel, linked together by a central stalk and a peripheral stalk. During catalysis, ATP synthesis in the catalytic domain of F(1) is coupled via a rotary mechanism of the central stalk subunits to proton translocation. Part of the complex F(0) domain. Minor subunit located with subunit a in the membrane. The protein is ATP synthase protein 8 (ATP8) of Eremothecium gossypii (strain ATCC 10895 / CBS 109.51 / FGSC 9923 / NRRL Y-1056) (Yeast).